A 122-amino-acid polypeptide reads, in one-letter code: Large ribosomal subunit protein bL12 (122 aa).

The protein belongs to the bacterial ribosomal protein bL12 family. As to quaternary structure, homodimer. Part of the ribosomal stalk of the 50S ribosomal subunit. Forms a multimeric L10(L12)X complex, where L10 forms an elongated spine to which 2 to 4 L12 dimers bind in a sequential fashion. Binds GTP-bound translation factors.

Functionally, forms part of the ribosomal stalk which helps the ribosome interact with GTP-bound translation factors. Is thus essential for accurate translation. In Acinetobacter baumannii (strain AB0057), this protein is Large ribosomal subunit protein bL12.